We begin with the raw amino-acid sequence, 63 residues long: MPKLRVTQIASVAGRKPGQKETLIGLGLNKIGRTRVLEDTPSIRGMTRKVAHLIQVEETNEAE.

It belongs to the universal ribosomal protein uL30 family. In terms of assembly, part of the 50S ribosomal subunit.

This chain is Large ribosomal subunit protein uL30, found in Granulibacter bethesdensis (strain ATCC BAA-1260 / CGDNIH1).